A 383-amino-acid chain; its full sequence is Probable cell wall hydrolase LytN (383 aa).

A signal peptide spans Met1 to Ala49. A LysM domain is found at Gln175–Val219. The 138-residue stretch at Asn241–Arg378 folds into the Peptidase C51 domain.

It is found in the secreted. Its function is as follows. Probably involved in peptidoglycan hydrolysis. This is Probable cell wall hydrolase LytN (lytN) from Staphylococcus aureus (strain Mu50 / ATCC 700699).